The sequence spans 284 residues: Homeobox protein six1b (284 aa).

The homeobox DNA-binding region spans 124 to 183; that stretch reads GEETSYCFKEKSRGVLREWYTHNPYPSPREKRELAEATGLTTTQVSNWFKNRRQRDRAAE. Positions 167-238 are disordered; that stretch reads QVSNWFKNRR…NSVLLLQGNM (72 aa). The segment covering 179–190 has biased composition (basic and acidic residues); that stretch reads DRAAEAKERENS. 2 stretches are compositionally biased toward polar residues: residues 191 to 204 and 226 to 238; these read ENNNTGANKQNQLS and PDQNSVLLLQGNM.

It belongs to the SIX/Sine oculis homeobox family. Interacts with eya1.

The protein localises to the nucleus. Its subcellular location is the cytoplasm. In terms of biological role, transcription factor that is involved in the regulation of cell proliferation, apoptosis and embryonic development. Depending on context, functions as a transcriptional repressor or activator. Transcriptional activation is enhanced by eya1 (in vitro). Plays an important role in the development of the inner ear, where it promotes hair cell proliferation and inhibits proliferation of neural progenitor cells. Required for normal myogenesis. Plays a role in the development of fast muscle fibers throughout the body, as well as the development of craniofacial muscles. Required for normal expression of myod1 and myog during myogenesis. This Danio rerio (Zebrafish) protein is Homeobox protein six1b (six1b).